The primary structure comprises 299 residues: ATP phosphoribosyltransferase (299 aa).

This sequence belongs to the ATP phosphoribosyltransferase family. Long subfamily. The cofactor is Mg(2+).

It localises to the cytoplasm. It catalyses the reaction 1-(5-phospho-beta-D-ribosyl)-ATP + diphosphate = 5-phospho-alpha-D-ribose 1-diphosphate + ATP. Its pathway is amino-acid biosynthesis; L-histidine biosynthesis; L-histidine from 5-phospho-alpha-D-ribose 1-diphosphate: step 1/9. With respect to regulation, feedback inhibited by histidine. In terms of biological role, catalyzes the condensation of ATP and 5-phosphoribose 1-diphosphate to form N'-(5'-phosphoribosyl)-ATP (PR-ATP). Has a crucial role in the pathway because the rate of histidine biosynthesis seems to be controlled primarily by regulation of HisG enzymatic activity. The sequence is that of ATP phosphoribosyltransferase from Campylobacter jejuni subsp. jejuni serotype O:2 (strain ATCC 700819 / NCTC 11168).